A 364-amino-acid chain; its full sequence is UDP-N-acetylglucosamine--N-acetylmuramyl-(pentapeptide) pyrophosphoryl-undecaprenol N-acetylglucosamine transferase (364 aa).

Residues 10 to 12 (TGG), asparagine 128, arginine 170, serine 199, isoleucine 250, and glutamine 295 each bind UDP-N-acetyl-alpha-D-glucosamine.

This sequence belongs to the glycosyltransferase 28 family. MurG subfamily.

It is found in the cell inner membrane. The catalysed reaction is di-trans,octa-cis-undecaprenyl diphospho-N-acetyl-alpha-D-muramoyl-L-alanyl-D-glutamyl-meso-2,6-diaminopimeloyl-D-alanyl-D-alanine + UDP-N-acetyl-alpha-D-glucosamine = di-trans,octa-cis-undecaprenyl diphospho-[N-acetyl-alpha-D-glucosaminyl-(1-&gt;4)]-N-acetyl-alpha-D-muramoyl-L-alanyl-D-glutamyl-meso-2,6-diaminopimeloyl-D-alanyl-D-alanine + UDP + H(+). It participates in cell wall biogenesis; peptidoglycan biosynthesis. In terms of biological role, cell wall formation. Catalyzes the transfer of a GlcNAc subunit on undecaprenyl-pyrophosphoryl-MurNAc-pentapeptide (lipid intermediate I) to form undecaprenyl-pyrophosphoryl-MurNAc-(pentapeptide)GlcNAc (lipid intermediate II). The sequence is that of UDP-N-acetylglucosamine--N-acetylmuramyl-(pentapeptide) pyrophosphoryl-undecaprenol N-acetylglucosamine transferase from Chlorobium phaeobacteroides (strain DSM 266 / SMG 266 / 2430).